The following is a 158-amino-acid chain: Deoxyuridine 5'-triphosphate nucleotidohydrolase (158 aa).

Residues 75–77 (RSG), Asn-88, 92–94 (TVD), and Lys-102 each bind substrate.

This sequence belongs to the dUTPase family. It depends on Mg(2+) as a cofactor.

The enzyme catalyses dUTP + H2O = dUMP + diphosphate + H(+). It participates in pyrimidine metabolism; dUMP biosynthesis; dUMP from dCTP (dUTP route): step 2/2. Its function is as follows. This enzyme is involved in nucleotide metabolism: it produces dUMP, the immediate precursor of thymidine nucleotides and it decreases the intracellular concentration of dUTP so that uracil cannot be incorporated into DNA. In Bifidobacterium longum (strain DJO10A), this protein is Deoxyuridine 5'-triphosphate nucleotidohydrolase.